Here is a 117-residue protein sequence, read N- to C-terminus: Hainantoxin-XV-5 (117 aa).

Residues 1 to 20 form the signal peptide; sequence MKLCAVIIASLLVCVAVASS. The segment at 20 to 55 is disordered; it reads SSDNQKEFAQEKEMTREETQSLGEHEKDDEVTGSEE. Positions 21–56 are excised as a propeptide; sequence SDNQKEFAQEKEMTREETQSLGEHEKDDEVTGSEER. Basic and acidic residues predominate over residues 23–55; the sequence is NQKEFAQEKEMTREETQSLGEHEKDDEVTGSEE. Disulfide bonds link Cys-58-Cys-72, Cys-65-Cys-78, Cys-69-Cys-115, and Cys-71-Cys-91.

Belongs to the neurotoxin 03 (Tx2) family. 02 subfamily. HNTX-XV sub-subfamily. Expressed by the venom gland.

It is found in the secreted. In terms of biological role, putative ion channel inhibitor. The sequence is that of Hainantoxin-XV-5 from Cyriopagopus hainanus (Chinese bird spider).